A 333-amino-acid chain; its full sequence is MGRAPCCDKANVKKGPWSPEEDVKLKDYIDKYGTGGNWIALPQKIGLKRCGKSCRLRWLNYLRPNIKHGGFSEEEDRIILSLYISIGSRWSIIAAQLPGRTDNDIKNYWNTKLKKKLLGRQKQMNRQDSITDSTENNLSNNNNNKSPQNLSNSALERLQLHMQLQNLQSPFSSFYNNPILWPKLHPLLQSTTTNQNPKLASQESFHPLGVNVDHQHNNTKLAQINNGASSLYSENVEQSQNPAHEFQPNFGFSQDLRLDNHNMDFMNRGVSKELFQVGNEFELTNGSSWWSEEVELERKTTSSSSWGSASVLDQTTEGMVMLQDYAQMSYHSV.

2 consecutive HTH myb-type domains span residues 9–62 (KANV…LNYL) and 63–117 (RPNI…KKKL). DNA-binding regions (H-T-H motif) lie at residues 38–62 (WIALPQKIGLKRCGKSCRLRWLNYL) and 90–113 (WSIIAAQLPGRTDNDIKNYWNTKL). The interval 119 to 150 (GRQKQMNRQDSITDSTENNLSNNNNNKSPQNL) is disordered. Residues 122–135 (KQMNRQDSITDSTE) are compositionally biased toward polar residues. Over residues 136 to 150 (NNLSNNNNNKSPQNL) the composition is skewed to low complexity.

In terms of tissue distribution, expressed in leaves, roots (endodermis-specific) and seedlings.

It is found in the nucleus. Its function is as follows. Transcription factors that activates genes required for endodermal differentiation but represses genes involved in proliferative divisions, thus regulating the transition from proliferation to differentiation in root endodermis. Required for Casparian strip formation by positively regulating the expression of the Casparian strip genes CASP1, PER64 and ESB1 and other endodermis-specific genes, thus triggering correct localized lignin biosynthesis in root endodermis and subsequently regulating global ion homeostasis. The sequence is that of Transcription factor MYB36 from Arabidopsis thaliana (Mouse-ear cress).